The following is a 251-amino-acid chain: MTKTEKKLRHYITKAIADYKLLDKGDKVMLCLSGGKDSFGLLKVLHGLIEDKTYDIDLHVYTLDQSQPGWDDSQLRKYLDDLGVSYEIETKNTYGVIIDKVPEGKTYCSLCSRLRRGNIYRYAKEHKMDKIILGHHHDDLIQSLLMSILYQGQIKSMPPKFVTQDGENTVIRPMVLVQERDLIEFAKEENFPIIPCNLCGSQENLKRKKVKKLIQDLALENPKVPSNILNSLSNVLPSHLMDKNLLNSLEN.

The PP-loop motif motif lies at 33–38 (SGGKDS). Positions 108, 111, and 199 each coordinate [4Fe-4S] cluster.

Belongs to the TtcA family. As to quaternary structure, homodimer. It depends on Mg(2+) as a cofactor. [4Fe-4S] cluster serves as cofactor.

The protein resides in the cytoplasm. The enzyme catalyses cytidine(32) in tRNA + S-sulfanyl-L-cysteinyl-[cysteine desulfurase] + AH2 + ATP = 2-thiocytidine(32) in tRNA + L-cysteinyl-[cysteine desulfurase] + A + AMP + diphosphate + H(+). The protein operates within tRNA modification. In terms of biological role, catalyzes the ATP-dependent 2-thiolation of cytidine in position 32 of tRNA, to form 2-thiocytidine (s(2)C32). The sulfur atoms are provided by the cysteine/cysteine desulfurase (IscS) system. In Francisella tularensis subsp. tularensis (strain WY96-3418), this protein is tRNA-cytidine(32) 2-sulfurtransferase 2.